A 270-amino-acid polypeptide reads, in one-letter code: Putative pyruvate, phosphate dikinase regulatory protein (270 aa).

Residue 151 to 158 (GVSRTSKT) participates in ADP binding.

Belongs to the pyruvate, phosphate/water dikinase regulatory protein family. PDRP subfamily.

It carries out the reaction N(tele)-phospho-L-histidyl/L-threonyl-[pyruvate, phosphate dikinase] + ADP = N(tele)-phospho-L-histidyl/O-phospho-L-threonyl-[pyruvate, phosphate dikinase] + AMP + H(+). It catalyses the reaction N(tele)-phospho-L-histidyl/O-phospho-L-threonyl-[pyruvate, phosphate dikinase] + phosphate + H(+) = N(tele)-phospho-L-histidyl/L-threonyl-[pyruvate, phosphate dikinase] + diphosphate. Functionally, bifunctional serine/threonine kinase and phosphorylase involved in the regulation of the pyruvate, phosphate dikinase (PPDK) by catalyzing its phosphorylation/dephosphorylation. In Bacillus velezensis (strain DSM 23117 / BGSC 10A6 / LMG 26770 / FZB42) (Bacillus amyloliquefaciens subsp. plantarum), this protein is Putative pyruvate, phosphate dikinase regulatory protein.